Reading from the N-terminus, the 137-residue chain is Histone H2B.4 (137 aa).

The span at 1 to 37 shows a compositional bias: basic and acidic residues; the sequence is MAPKAEKKPAEKKPTEEKAEKKPRAEKRVPGKEGGEK. Positions 1–45 are disordered; the sequence is MAPKAEKKPAEKKPTEEKAEKKPRAEKRVPGKEGGEKKGKKKAKK. Lys7 and Lys27 each carry N6-acetyllysine. Lys133 is covalently cross-linked (Glycyl lysine isopeptide (Lys-Gly) (interchain with G-Cter in ubiquitin)).

The protein belongs to the histone H2B family. In terms of assembly, the nucleosome is a histone octamer containing two molecules each of H2A, H2B, H3 and H4 assembled in one H3-H4 heterotetramer and two H2A-H2B heterodimers. The octamer wraps approximately 147 bp of DNA. Can be acetylated to form H2BK6ac and H2BK33ac. In terms of processing, monoubiquitinated to form H2BK143ub1; may give a specific tag for epigenetic transcriptional activation.

Its subcellular location is the nucleus. The protein resides in the chromosome. Its function is as follows. Core component of nucleosome. Nucleosomes wrap and compact DNA into chromatin, limiting DNA accessibility to the cellular machineries which require DNA as a template. Histones thereby play a central role in transcription regulation, DNA repair, DNA replication and chromosomal stability. DNA accessibility is regulated via a complex set of post-translational modifications of histones, also called histone code, and nucleosome remodeling. The chain is Histone H2B.4 from Zea mays (Maize).